A 128-amino-acid chain; its full sequence is AECKVTVDSTDQMSFNTKDIAIDKSCKTFTVELTHSGSLPKNVMGHNLVISKEADMQPIATDGLSAGIDKQYLKDGDARVIAHTKVIGAGEKDSVTFDVSKLAAGEKYGFFCSFPGHISMMKGTVTLK.

A Plastocyanin-like domain is found at 1–128 (AECKVTVDST…SMMKGTVTLK (128 aa)). The cysteines at positions 3 and 26 are disulfide-linked. His-46, Cys-112, His-117, and Met-121 together coordinate Cu cation.

Its subcellular location is the periplasm. Functionally, transfers electrons from cytochrome c551 to cytochrome oxidase. This Pseudomonas putida (Arthrobacter siderocapsulatus) protein is Azurin.